The sequence spans 245 residues: 1-acyl-sn-glycerol-3-phosphate acyltransferase (245 aa).

An N-formylmethionine modification is found at Met1. An HXXXXD motif motif is present at residues His73–Asp78.

The protein belongs to the 1-acyl-sn-glycerol-3-phosphate acyltransferase family.

It localises to the cell inner membrane. The enzyme catalyses a 1-acyl-sn-glycero-3-phosphate + an acyl-CoA = a 1,2-diacyl-sn-glycero-3-phosphate + CoA. It catalyses the reaction a fatty acyl-[ACP] + a 1-acyl-sn-glycero-3-phosphate = a 1,2-diacyl-sn-glycero-3-phosphate + holo-[ACP]. It participates in phospholipid metabolism; CDP-diacylglycerol biosynthesis; CDP-diacylglycerol from sn-glycerol 3-phosphate: step 2/3. In terms of biological role, converts lysophosphatidic acid (LPA) into phosphatidic acid by incorporating an acyl moiety at the 2 position. This enzyme can utilize either acyl-CoA or acyl-ACP as the fatty acyl donor. The polypeptide is 1-acyl-sn-glycerol-3-phosphate acyltransferase (plsC) (Escherichia coli (strain K12)).